The following is a 362-amino-acid chain: Phosphoserine aminotransferase (362 aa).

Arginine 43 serves as a coordination point for L-glutamate. Pyridoxal 5'-phosphate-binding positions include 77-78 (AR), tryptophan 103, threonine 153, aspartate 173, and glutamine 196. Residue lysine 197 is modified to N6-(pyridoxal phosphate)lysine.

Belongs to the class-V pyridoxal-phosphate-dependent aminotransferase family. SerC subfamily. Homodimer. Pyridoxal 5'-phosphate serves as cofactor.

Its subcellular location is the cytoplasm. It carries out the reaction O-phospho-L-serine + 2-oxoglutarate = 3-phosphooxypyruvate + L-glutamate. It catalyses the reaction 4-(phosphooxy)-L-threonine + 2-oxoglutarate = (R)-3-hydroxy-2-oxo-4-phosphooxybutanoate + L-glutamate. Its pathway is amino-acid biosynthesis; L-serine biosynthesis; L-serine from 3-phospho-D-glycerate: step 2/3. It functions in the pathway cofactor biosynthesis; pyridoxine 5'-phosphate biosynthesis; pyridoxine 5'-phosphate from D-erythrose 4-phosphate: step 3/5. Functionally, catalyzes the reversible conversion of 3-phosphohydroxypyruvate to phosphoserine and of 3-hydroxy-2-oxo-4-phosphonooxybutanoate to phosphohydroxythreonine. This Legionella pneumophila subsp. pneumophila (strain Philadelphia 1 / ATCC 33152 / DSM 7513) protein is Phosphoserine aminotransferase.